A 526-amino-acid chain; its full sequence is METVVDHHVIEVDEFDALFIEVKTEAAPVESVVSVAPIPARFPAKLHARKIAAELNASDGLVFLPGEPSRSYEDSDMGPAFRQRRYFYYLSGANFADCAVTYELASDRLILWVPYVEPRQVLWFGSTPGISECLKQFDVDDVRYTTQLNKFLYRHLTPGSTLYVIHADQVPLHGDFLQSAAEVRIDVTSLQPAMDQARVVKTDYEVAMIRKAAAVSALAHRRVAEKLLRLENESEIEAVYQAWCTTSGAREQAYAIIAGSGKNASTLHYDANNEPLEGREVVVFDAGCEWHCYASDITRTLPISGKFSAEAKAVYDVVAKMQDECISFIRPGTLFFDLHIHASRVAQQGLLKLGVLKGDPAEVWDAGTVAAFFPHGLGHHVGLEVHDVSGRERLLLLNNVMGAQGGRVGKREVVTPEMLGAMVQASAPGAAAAAAPPPYKGRQYLRKNMIVTVEPGIYFCREYIEGYFLSNPRHARFINKTVLERYYRVGGVRIEDDILVTDDGYENLSTGAPKGEELLRVINGKA.

Mn(2+)-binding residues include Asp-285, Asp-296, Glu-454, and Glu-495.

The protein belongs to the peptidase M24B family. The cofactor is Mn(2+).

It catalyses the reaction Release of any N-terminal amino acid, including proline, that is linked to proline, even from a dipeptide or tripeptide.. In terms of biological role, catalyzes the removal of a penultimate prolyl residue from the N-termini of peptides. The protein is Probable Xaa-Pro aminopeptidase GLRG_02280 of Colletotrichum graminicola (strain M1.001 / M2 / FGSC 10212) (Maize anthracnose fungus).